Reading from the N-terminus, the 298-residue chain is Triosephosphate isomerase, chloroplastic (298 aa).

The segment covering 1–18 has biased composition (pro residues); it reads MAARRPSPPPASPPPPRP. Residues 1 to 32 are disordered; that stretch reads MAARRPSPPPASPPPPRPRSTTTTRTTSSASA. The N-terminal 43 residues, 1–43, are a transit peptide targeting the chloroplast; it reads MAARRPSPPPASPPPPRPRSTTTTRTTSSASAAPAAAQRLVAM. The span at 19–32 shows a compositional bias: low complexity; it reads RSTTTTRTTSSASA. Residues Asn54 and Lys56 each coordinate substrate. The active-site Electrophile is the His138. At Cys186 the chain carries Cysteine derivative. The active-site Proton acceptor is Glu208.

It belongs to the triosephosphate isomerase family. In terms of assembly, homodimer.

The protein resides in the plastid. It is found in the chloroplast. It carries out the reaction D-glyceraldehyde 3-phosphate = dihydroxyacetone phosphate. Its pathway is carbohydrate biosynthesis; Calvin cycle. The sequence is that of Triosephosphate isomerase, chloroplastic from Secale cereale (Rye).